The chain runs to 419 residues: Creatine kinase S-type, mitochondrial (419 aa).

The transit peptide at 1–39 (MASIFSKLLTGRNASLLFATMGTSVLTTGYLLNRQKVCA) directs the protein to the mitochondrion. The cardiolipin-binding stretch occupies residues 40–64 (EVREQPRLFPPSADYPDLRKHNNCM). The Phosphagen kinase N-terminal domain occupies 46 to 132 (RLFPPSADYP…FDPVIKLRHN (87 aa)). One can recognise a Phosphagen kinase C-terminal domain in the interval 159–401 (YVLSSRVRTG…NYLVDCEKKL (243 aa)). ATP contacts are provided by residues 162-166 (SSRVR) and H225. Y255 is modified (phosphotyrosine). Residues R270, R326, 354–359 (RGTGGV), and D369 contribute to the ATP site. Position 356 is a phosphothreonine (T356).

Belongs to the ATP:guanido phosphotransferase family. Exists as an octamer composed of four CKMT2 homodimers. In terms of tissue distribution, sarcomere-specific. Found only in heart and skeletal muscles.

It is found in the mitochondrion inner membrane. It carries out the reaction creatine + ATP = N-phosphocreatine + ADP + H(+). Reversibly catalyzes the transfer of phosphate between ATP and various phosphogens (e.g. creatine phosphate). Creatine kinase isoenzymes play a central role in energy transduction in tissues with large, fluctuating energy demands, such as skeletal muscle, heart, brain and spermatozoa. In Homo sapiens (Human), this protein is Creatine kinase S-type, mitochondrial (CKMT2).